The chain runs to 107 residues: Nucleoid-associated protein AZOSEA06390 (107 aa).

Belongs to the YbaB/EbfC family. As to quaternary structure, homodimer.

The protein resides in the cytoplasm. The protein localises to the nucleoid. Binds to DNA and alters its conformation. May be involved in regulation of gene expression, nucleoid organization and DNA protection. The polypeptide is Nucleoid-associated protein AZOSEA06390 (Aromatoleum aromaticum (strain DSM 19018 / LMG 30748 / EbN1) (Azoarcus sp. (strain EbN1))).